Here is a 225-residue protein sequence, read N- to C-terminus: Small ribosomal subunit protein uS5 (225 aa).

Residues 57–120 enclose the S5 DRBM domain; it reads LEEQVLDVKL…AHAKLSLIKV (64 aa).

The protein belongs to the universal ribosomal protein uS5 family. In terms of assembly, part of the 30S ribosomal subunit. Contacts protein S4.

In terms of biological role, with S4 and S12 plays an important role in translational accuracy. This Methanococcus maripaludis (strain DSM 14266 / JCM 13030 / NBRC 101832 / S2 / LL) protein is Small ribosomal subunit protein uS5.